The following is a 147-amino-acid chain: Hemoglobin subunit beta (147 aa).

A Globin domain is found at 3-147 (EWTDKERSII…VVSALGKQYH (145 aa)). Heme b is bound by residues H64 and H93.

It belongs to the globin family. In terms of assembly, heterotetramer of two alpha chains and two beta chains. In terms of tissue distribution, red blood cells.

Its function is as follows. Involved in oxygen transport from gills to the various peripheral tissues. This is Hemoglobin subunit beta (hbb) from Trematomus hansoni (Striped rockcod).